Here is a 142-residue protein sequence, read N- to C-terminus: Galactose-6-phosphate isomerase subunit LacA 2 (142 aa).

Belongs to the LacAB/RpiB family. As to quaternary structure, heteromultimeric protein consisting of LacA and LacB.

The enzyme catalyses aldehydo-D-galactose 6-phosphate = keto-D-tagatose 6-phosphate. Its pathway is carbohydrate metabolism; D-galactose 6-phosphate degradation; D-tagatose 6-phosphate from D-galactose 6-phosphate: step 1/1. In Streptococcus pyogenes serotype M3 (strain ATCC BAA-595 / MGAS315), this protein is Galactose-6-phosphate isomerase subunit LacA 2.